The sequence spans 347 residues: uncharacterized protein (347 aa).

The signal sequence occupies residues 1–26; it reads MQGRVAGSCAPLGLLLVCLHLPGLFA. Positions 41-60 are enriched in polar residues; sequence GTNLPQLGQPSSTGPSNSEH. Disordered regions lie at residues 41–110 and 148–189; these read GTNL…MDSW and SGPL…AGGK. The segment covering 148-157 has biased composition (low complexity); the sequence is SGPLPGESSP.

Binds to numerous extracellular matrix proteins.

It localises to the secreted. The protein resides in the extracellular space. The protein localises to the extracellular matrix. This is an uncharacterized protein from Pan troglodytes (Chimpanzee).